Reading from the N-terminus, the 304-residue chain is GMP synthase [glutamine-hydrolyzing] subunit B (304 aa).

In terms of domain architecture, GMPS ATP-PPase spans 2–183 (VKVEKFIPNA…LDLPEEICER (182 aa)). 28-34 (SGGVDSS) serves as a coordination point for ATP.

As to quaternary structure, heterodimer composed of a glutamine amidotransferase subunit (A) and a GMP-binding subunit (B).

The catalysed reaction is XMP + L-glutamine + ATP + H2O = GMP + L-glutamate + AMP + diphosphate + 2 H(+). Its pathway is purine metabolism; GMP biosynthesis; GMP from XMP (L-Gln route): step 1/1. Catalyzes the synthesis of GMP from XMP. This is GMP synthase [glutamine-hydrolyzing] subunit B from Methanococcoides burtonii (strain DSM 6242 / NBRC 107633 / OCM 468 / ACE-M).